Consider the following 1188-residue polypeptide: Spermatogenesis-associated protein 31C1 (1188 aa).

The chain crosses the membrane as a helical span at residues 23-43 (PWVLDIFLTLVFALGLFFLLL). Disordered stretches follow at residues 57-92 (PSPR…KNHS), 121-249 (LEKG…LLTP), 483-510 (PGTS…EAQT), 530-567 (TPQN…DSGS), 733-813 (MPER…PTVP), 934-1013 (NMGH…PSIS), 1121-1143 (QQAT…QQPL), and 1155-1188 (LRHP…HHHH). Basic residues-rich tracts occupy residues 59–68 (PRKRKRHLVS) and 80–92 (RRGR…KNHS). Over residues 138-154 (VGKRTPDGASRSSHEPM) the composition is skewed to basic and acidic residues. Residues 191–207 (SSLSASQPPEPSLLLER) are compositionally biased toward low complexity. Pro residues predominate over residues 210–241 (PEPPALFPHPPHTPDPLACSPPPPKGFTPPPL). Positions 495–510 (WQSSTSTGESSKEAQT) are enriched in polar residues. Polar residues-rich tracts occupy residues 783–800 (LKGS…SSRA) and 943–954 (PNCQGSCKSQSP). The span at 960-976 (HKRENSRKPNLEKHEEM) shows a compositional bias: basic and acidic residues. Residues 1121 to 1130 (QQATLKNQSR) show a composition bias toward polar residues.

Belongs to the SPATA31 family.

The protein localises to the membrane. Its function is as follows. May play a role in spermatogenesis. This Homo sapiens (Human) protein is Spermatogenesis-associated protein 31C1 (SPATA31C1).